The sequence spans 392 residues: INCREASED PETAL GROWTH ANISOTROPY 1-like protein 1 (392 aa).

Residues 11-52 (LLRLVKELQAYLVRNDKLEKENHELRQEVARLRAQVSNLKSH) are a coiled coil. 2 stretches are compositionally biased toward polar residues: residues 65-76 (QSSYDGSNTDGS) and 100-109 (PTIQGQSTAT). The interval 65–128 (QSSYDGSNTD…SKRTLGKRSV (64 aa)) is disordered. A coiled-coil region spans residues 269-299 (KDSLTQALQRIQSLQDRLEESVNNTEKMRDS).

This sequence belongs to the IPGA1 family.

The protein resides in the cytoplasm. It localises to the cytoskeleton. Functionally, microtubule-associated protein probably involved in the regulation of microtubule organization. This chain is INCREASED PETAL GROWTH ANISOTROPY 1-like protein 1, found in Arabidopsis thaliana (Mouse-ear cress).